The following is a 127-amino-acid chain: Cyclin-dependent kinase 2-associated protein 2 (127 aa).

The tract at residues Met-1–Phe-49 is disordered. Residues Ala-9–Pro-44 show a composition bias toward low complexity. The interaction with CDK2 stretch occupies residues Pro-65–Ile-107.

The protein belongs to the CDK2AP family. Component of the nucleosome remodeling and deacetylase (NuRD) repressor complex, composed of core proteins MTA1, MTA2, MTA3, RBBP4, RBBP7, HDAC1, HDAC2, MBD2, MBD3, and peripherally associated proteins CDK2AP1, CDK2AP2, GATAD2A, GATAD2B, CHD3, CHD4 and CHD5. The exact stoichiometry of the NuRD complex is unknown, and some subunits such as MBD2 and MBD3, GATAD2A and GATAD2B, and CHD3, CHD4 and CHD5 define mutually exclusive NuRD complexes. Interacts with CDK2AP1. Interacts with CDK2. Interacts with MAPK1. In terms of processing, phosphorylated by MAPK1 and CDK2.

The protein resides in the cytoplasm. It is found in the nucleus. In terms of biological role, acts as a component of the histone deacetylase NuRD complex which participates in the remodeling of chromatin. Inhibits cell cycle G1/S phase transition by repressing CDK2 expression and activation; represses CDK2 activation by inhibiting its interaction with cyclin E and A. Plays a role in regulating the self-renewal of embryonic stem cells (ESCs) and in maintaining cell survival during terminal differentiation of ESCs. Regulates microtubule organization of metaphase II oocytes. The sequence is that of Cyclin-dependent kinase 2-associated protein 2 (CDK2AP2) from Bos taurus (Bovine).